A 248-amino-acid polypeptide reads, in one-letter code: Small ribosomal subunit protein eS6 (248 aa).

Positions 213–248 are disordered; that stretch reads LLAQRKKESKAKREEAKRRRSASMRESKSSISSDKK. A compositionally biased stretch (basic and acidic residues) spans 223-248; the sequence is AKREEAKRRRSASMRESKSSISSDKK.

It belongs to the eukaryotic ribosomal protein eS6 family. Component of the small ribosomal subunit. Part of the small subunit (SSU) processome, composed of more than 70 proteins and the RNA chaperone small nucleolar RNA (snoRNA) U3. In terms of processing, ribosomal protein S6 is the major substrate of protein kinases in eukaryote ribosomes.

It localises to the cytoplasm. The protein localises to the nucleus. Its subcellular location is the nucleolus. Component of the 40S small ribosomal subunit. Plays an important role in controlling cell growth and proliferation through the selective translation of particular classes of mRNA. Part of the small subunit (SSU) processome, first precursor of the small eukaryotic ribosomal subunit. During the assembly of the SSU processome in the nucleolus, many ribosome biogenesis factors, an RNA chaperone and ribosomal proteins associate with the nascent pre-rRNA and work in concert to generate RNA folding, modifications, rearrangements and cleavage as well as targeted degradation of pre-ribosomal RNA by the RNA exosome. In Glossina morsitans morsitans (Savannah tsetse fly), this protein is Small ribosomal subunit protein eS6 (RpS6).